Reading from the N-terminus, the 366-residue chain is Peptide chain release factor 1 (366 aa).

Glutamine 239 is subject to N5-methylglutamine.

The protein belongs to the prokaryotic/mitochondrial release factor family. Methylated by PrmC. Methylation increases the termination efficiency of RF1.

It localises to the cytoplasm. Peptide chain release factor 1 directs the termination of translation in response to the peptide chain termination codons UAG and UAA. This Baumannia cicadellinicola subsp. Homalodisca coagulata protein is Peptide chain release factor 1.